The primary structure comprises 122 residues: Large ribosomal subunit protein uL14 (122 aa).

This sequence belongs to the universal ribosomal protein uL14 family. In terms of assembly, part of the 50S ribosomal subunit. Forms a cluster with proteins L3 and L19. In the 70S ribosome, L14 and L19 interact and together make contacts with the 16S rRNA in bridges B5 and B8.

Its function is as follows. Binds to 23S rRNA. Forms part of two intersubunit bridges in the 70S ribosome. This chain is Large ribosomal subunit protein uL14, found in Kineococcus radiotolerans (strain ATCC BAA-149 / DSM 14245 / SRS30216).